The chain runs to 330 residues: MNEQPKPTSERHVPVLRDRCINLLAPGFDAARQQGKAPIVIDATLGMGGHSEAMLQRFPDLHLIGIDRDEEALALAGERLAPFSARTDLVHAVYDEIPEVLADLGVTEISGILMDLGVSSLQLDERERGFAYSFDAPLDMRMDTSRGQTAADVVNTYNEEELVRIIRKWGEEKFAGRIANRIVAARGEKPFTTTGELVEQIRSVVPAGAAKSGGHPAKRTFQALRIEVNEELDVLERAVPAAVDALAMGGRIVVMSYHSLEDKIVKSVLQGRSKSSAPLGFPVELEEHKPELKILTKGTEVPTAVEIAENPRAASARLRAAERIRARRAA.

S-adenosyl-L-methionine is bound by residues 48–50 (GGH), aspartate 67, leucine 101, aspartate 115, and glutamine 122.

It belongs to the methyltransferase superfamily. RsmH family.

The protein resides in the cytoplasm. The enzyme catalyses cytidine(1402) in 16S rRNA + S-adenosyl-L-methionine = N(4)-methylcytidine(1402) in 16S rRNA + S-adenosyl-L-homocysteine + H(+). Its function is as follows. Specifically methylates the N4 position of cytidine in position 1402 (C1402) of 16S rRNA. This is Ribosomal RNA small subunit methyltransferase H from Pseudarthrobacter chlorophenolicus (strain ATCC 700700 / DSM 12829 / CIP 107037 / JCM 12360 / KCTC 9906 / NCIMB 13794 / A6) (Arthrobacter chlorophenolicus).